Consider the following 130-residue polypeptide: MKSLGRHIIAEFYDCDKEILDNVEKIEQSMKNAAYETGATLVNSSFHRFLPYGVSGVVVISESHLTIHTWPEYGYAAVDLFTCGDDVDPWKAFTYLKEVLKSQRVHVVEHLRGKYDEIGIPENSPHKMEV.

Catalysis depends on S63, which acts as the Schiff-base intermediate with substrate; via pyruvic acid. S63 carries the pyruvic acid (Ser); by autocatalysis modification. The active-site Proton acceptor; for processing activity is the H68. C83 serves as the catalytic Proton donor; for catalytic activity.

This sequence belongs to the prokaryotic AdoMetDC family. Type 1 subfamily. As to quaternary structure, heterotetramer of two alpha and two beta chains arranged as a dimer of alpha/beta heterodimers. Requires pyruvate as cofactor. Is synthesized initially as an inactive proenzyme. Formation of the active enzyme involves a self-maturation process in which the active site pyruvoyl group is generated from an internal serine residue via an autocatalytic post-translational modification. Two non-identical subunits are generated from the proenzyme in this reaction, and the pyruvate is formed at the N-terminus of the alpha chain, which is derived from the carboxyl end of the proenzyme. The post-translation cleavage follows an unusual pathway, termed non-hydrolytic serinolysis, in which the side chain hydroxyl group of the serine supplies its oxygen atom to form the C-terminus of the beta chain, while the remainder of the serine residue undergoes an oxidative deamination to produce ammonia and the pyruvoyl group blocking the N-terminus of the alpha chain.

The catalysed reaction is S-adenosyl-L-methionine + H(+) = S-adenosyl 3-(methylsulfanyl)propylamine + CO2. Its pathway is amine and polyamine biosynthesis; S-adenosylmethioninamine biosynthesis; S-adenosylmethioninamine from S-adenosyl-L-methionine: step 1/1. Catalyzes the decarboxylation of S-adenosylmethionine to S-adenosylmethioninamine (dcAdoMet), the propylamine donor required for the synthesis of the polyamines spermine and spermidine from the diamine putrescine. The protein is S-adenosylmethionine decarboxylase proenzyme of Thermosipho africanus (strain TCF52B).